We begin with the raw amino-acid sequence, 180 residues long: Sec-independent protein translocase protein TatB (180 aa).

The helical transmembrane segment at 1–21 (MFDIGWSELLVIGVVALIAIG) threads the bilayer. Positions 77-180 (TRGDLMTRLT…DQTARGAKAS (104 aa)) are disordered. Residues 105-129 (ADKPSVSSDAASASGSAAPEAGAAE) are compositionally biased toward low complexity.

This sequence belongs to the TatB family. The Tat system comprises two distinct complexes: a TatABC complex, containing multiple copies of TatA, TatB and TatC subunits, and a separate TatA complex, containing only TatA subunits. Substrates initially bind to the TatABC complex, which probably triggers association of the separate TatA complex to form the active translocon.

The protein resides in the cell inner membrane. Its function is as follows. Part of the twin-arginine translocation (Tat) system that transports large folded proteins containing a characteristic twin-arginine motif in their signal peptide across membranes. Together with TatC, TatB is part of a receptor directly interacting with Tat signal peptides. TatB may form an oligomeric binding site that transiently accommodates folded Tat precursor proteins before their translocation. This chain is Sec-independent protein translocase protein TatB, found in Nitrobacter winogradskyi (strain ATCC 25391 / DSM 10237 / CIP 104748 / NCIMB 11846 / Nb-255).